A 256-amino-acid polypeptide reads, in one-letter code: Small ribosomal subunit protein uS2 (256 aa).

Belongs to the universal ribosomal protein uS2 family.

The polypeptide is Small ribosomal subunit protein uS2 (Brucella anthropi (strain ATCC 49188 / DSM 6882 / CCUG 24695 / JCM 21032 / LMG 3331 / NBRC 15819 / NCTC 12168 / Alc 37) (Ochrobactrum anthropi)).